The primary structure comprises 330 residues: Flotillin-like protein FloA (330 aa).

Transmembrane regions (helical) follow at residues 3–23 (IISV…TLYM) and 26–46 (LRLW…TLIA).

The protein belongs to the flotillin-like FloA family. As to quaternary structure, homooligomerizes.

The protein resides in the cell membrane. It is found in the membrane raft. Its function is as follows. Found in functional membrane microdomains (FMM) that may be equivalent to eukaryotic membrane rafts. FMMs are highly dynamic and increase in number as cells age. Flotillins are thought to be important factors in membrane fluidity. This Sorangium cellulosum (strain So ce56) (Polyangium cellulosum (strain So ce56)) protein is Flotillin-like protein FloA.